The following is a 55-amino-acid chain: uncharacterized protein (55 aa).

This is an uncharacterized protein from Escherichia coli (strain K12).